The chain runs to 112 residues: SGSIRLKHIPRPSMKVCVFGDQHHLDEAAAGNIPAMSADDLKKLNKQKKLIKKLAKSYDAFIASESLIKQIPRILGPGLNKAGKFPSVVTHGESLQSKSDEIRATVKFQMKK.

It belongs to the universal ribosomal protein uL1 family.

In Caenorhabditis remanei (Caenorhabditis vulgaris), this protein is Large ribosomal subunit protein uL1 (rpl-10a).